Reading from the N-terminus, the 154-residue chain is Transcriptional repressor NrdR (154 aa).

Residues 3-34 (CPFCRHPDSRVVDSRETDEGQAIRRRRSCPEC) fold into a zinc finger. An ATP-cone domain is found at 46–136 (LAVVKRSGVT…VYRSFESAAD (91 aa)).

The protein belongs to the NrdR family. The cofactor is Zn(2+).

Negatively regulates transcription of bacterial ribonucleotide reductase nrd genes and operons by binding to NrdR-boxes. The chain is Transcriptional repressor NrdR from Mycobacterium sp. (strain JLS).